A 274-amino-acid polypeptide reads, in one-letter code: 2,3,4,5-tetrahydropyridine-2,6-dicarboxylate N-succinyltransferase (274 aa).

Substrate is bound by residues Arg104 and Asp141.

This sequence belongs to the transferase hexapeptide repeat family. As to quaternary structure, homotrimer.

The protein localises to the cytoplasm. The catalysed reaction is (S)-2,3,4,5-tetrahydrodipicolinate + succinyl-CoA + H2O = (S)-2-succinylamino-6-oxoheptanedioate + CoA. Its pathway is amino-acid biosynthesis; L-lysine biosynthesis via DAP pathway; LL-2,6-diaminopimelate from (S)-tetrahydrodipicolinate (succinylase route): step 1/3. This Buchnera aphidicola subsp. Baizongia pistaciae (strain Bp) protein is 2,3,4,5-tetrahydropyridine-2,6-dicarboxylate N-succinyltransferase.